Consider the following 291-residue polypeptide: Small ribosomal subunit biogenesis GTPase RsgA (291 aa).

The region spanning 63–221 is the CP-type G domain; it reads KNELKRPPVS…IADTPGFSAL (159 aa). GTP is bound by residues 112 to 115 and 164 to 172; these read TKKD and GQSGVGKST. 4 residues coordinate Zn(2+): Cys245, Cys250, His252, and Cys258.

It belongs to the TRAFAC class YlqF/YawG GTPase family. RsgA subfamily. As to quaternary structure, monomer. Associates with 30S ribosomal subunit, binds 16S rRNA. The cofactor is Zn(2+).

It is found in the cytoplasm. Functionally, one of several proteins that assist in the late maturation steps of the functional core of the 30S ribosomal subunit. Helps release RbfA from mature subunits. May play a role in the assembly of ribosomal proteins into the subunit. Circularly permuted GTPase that catalyzes slow GTP hydrolysis, GTPase activity is stimulated by the 30S ribosomal subunit. This chain is Small ribosomal subunit biogenesis GTPase RsgA, found in Staphylococcus aureus (strain Mu50 / ATCC 700699).